Consider the following 174-residue polypeptide: Chorion class CB protein M5H4 (174 aa).

An N-terminal signal peptide occupies residues 1 to 20 (MTTIVVLICASALFVQLAFS). Residues 21 to 71 (QCLGRDPVIGFGGAYGSGWGGYDAISPYDGLGYGVPYSAGFIGLSPSNLAA) form a left arm region. Positions 72 to 142 (SCGGALAVNS…GDGAIGIVSE (71 aa)) are central domain. The tract at residues 143-174 (APIVAPASIGYGQWPVNAGYKGIGPCGCGGLY) is right arm.

It belongs to the chorion protein family.

In terms of biological role, this protein is one of many from the eggshell of the silk moth. The protein is Chorion class CB protein M5H4 of Bombyx mori (Silk moth).